A 131-amino-acid polypeptide reads, in one-letter code: Small ribosomal subunit protein uS8 (131 aa).

The protein belongs to the universal ribosomal protein uS8 family. In terms of assembly, part of the 30S ribosomal subunit. Contacts proteins S5 and S12.

One of the primary rRNA binding proteins, it binds directly to 16S rRNA central domain where it helps coordinate assembly of the platform of the 30S subunit. The polypeptide is Small ribosomal subunit protein uS8 (Neorickettsia sennetsu (strain ATCC VR-367 / Miyayama) (Ehrlichia sennetsu)).